The sequence spans 264 residues: SPRY domain-containing SOCS box protein 2 (264 aa).

A compositionally biased stretch (polar residues) spans 1–19; sequence MGQTALARGSSSTPTSQAL. Residues 1–34 form a disordered region; that stretch reads MGQTALARGSSSTPTSQALYSDFSPPEGLEELLS. Residues 26-221 enclose the B30.2/SPRY domain; the sequence is PEGLEELLSA…VRIRYMGERR (196 aa). The region spanning 222-264 is the SOCS box domain; that stretch reads VEEPQSLLHLSRLCVRHALGDTRLGQISTLPLPPAMKRYLLYK.

The protein belongs to the SPSB family. In terms of assembly, component of the probable ECS(SPSB2) E3 ubiquitin-protein ligase complex which contains CUL5, RNF7/RBX2, Elongin BC complex and SPSB2. Interacts with CUL5, RNF7, ELOB and ELOC. Interacts with MET. Interacts (via B30.2/SPRY domain) with PAWR; this interaction occurs in association with the Elongin BC complex. Interacts with NOS2.

The protein resides in the cytoplasm. Its subcellular location is the cytosol. The protein operates within protein modification; protein ubiquitination. In terms of biological role, substrate recognition component of a SCF-like ECS (Elongin BC-CUL2/5-SOCS-box protein) E3 ubiquitin-protein ligase complex which mediates the ubiquitination and subsequent proteasomal degradation of target proteins. Negatively regulates nitric oxide (NO) production and limits cellular toxicity in activated macrophages by mediating the ubiquitination and proteasomal degradation of NOS2. Acts as a bridge which links NOS2 with the ECS E3 ubiquitin ligase complex components ELOC and CUL5. The chain is SPRY domain-containing SOCS box protein 2 (Spsb2) from Mus musculus (Mouse).